Here is a 113-residue protein sequence, read N- to C-terminus: Ribosome-associated factor Y (113 aa).

The residue at position 66 (Lys66) is an N6-acetyllysine. A disordered region spans residues 91-113 (KGEARRAATSVKDANFVEEVEEE).

Belongs to the HPF/YfiA ribosome-associated protein family. YfiA subfamily. As to quaternary structure, associates mainly with 70S ribosomes.

In terms of biological role, during stationary phase, prevents 70S dimer formation, probably in order to regulate translation efficiency during transition between the exponential and the stationary phases. In addition, during environmental stress such as cold shock or excessive cell density at stationary phase, stabilizes the 70S ribosome against dissociation, inhibits translation initiation and increase translation accuracy. When normal growth conditions are restored, is quickly released from the ribosome. The sequence is that of Ribosome-associated factor Y from Escherichia coli O157:H7.